Reading from the N-terminus, the 368-residue chain is Glutamate 5-kinase (368 aa).

K18 contacts ATP. Substrate-binding residues include S58, D145, and N157. Residues 177-178 and 218-224 each bind ATP; these read SD and TGGMASK. One can recognise a PUA domain in the interval 280 to 358; sequence AGSLTLDEGA…SELPGELRRP (79 aa).

This sequence belongs to the glutamate 5-kinase family.

The protein resides in the cytoplasm. The enzyme catalyses L-glutamate + ATP = L-glutamyl 5-phosphate + ADP. Its pathway is amino-acid biosynthesis; L-proline biosynthesis; L-glutamate 5-semialdehyde from L-glutamate: step 1/2. Its function is as follows. Catalyzes the transfer of a phosphate group to glutamate to form L-glutamate 5-phosphate. The sequence is that of Glutamate 5-kinase from Mycobacterium ulcerans (strain Agy99).